Consider the following 89-residue polypeptide: uncharacterized protein (89 aa).

An N-terminal signal peptide occupies residues 1–19; it reads MQLTKTQFVRCVFLLLANS.

This is an uncharacterized protein from Sulfolobus islandicus filamentous virus (isolate Iceland/Hveragerdi) (SIFV).